We begin with the raw amino-acid sequence, 1024 residues long: Gamma-tubulin complex component 5 (1024 aa).

Disordered regions lie at residues 155–203 (IGPY…LDPC) and 521–545 (TENEEKMSDNASASSGSDQGPSSRQ). Residues 189–203 (TPLEEQDQNRKLDPC) show a composition bias toward basic and acidic residues. Positions 531–543 (ASASSGSDQGPSS) are enriched in low complexity.

It belongs to the TUBGCP family. Component of the gamma-tubulin ring complex (gTuRC) consisting of TUBGCP2, TUBGCP3, TUBGCP4, TUBGCP5 and TUBGCP6 and gamma-tubulin TUBG1 or TUBG2. TUBGCP2, TUBGCP3, TUBGCP4, TUBGCP5 and TUBGCP6 assemble in a 5:5:2:1:1 stoichiometry; each is associated with a gamma-tubulin, thereby arranging 14 gamma-tubulins in a helical manner. Gamma-tubulin at the first position is blocked by TUBGCP3 at the last position, allowing 13 protafilaments to grow into a microtubule. The gTuRC (via TUBGCP3 and TUBGCP6) interacts with ACTB and MZT1; the interactions form a luminal bridge that stabilizes the initial structure during complex assembly. The gTuRC (via TUBGCP2) interacts with MZT2A/MZT2B and CDK5RAP2 (via CM1 motif); the interactions play a role in gTuRC activation. In terms of tissue distribution, widely expressed, with highest levels in heart and skeletal muscle and moderate levels in brain.

It localises to the cytoplasm. Its subcellular location is the cytoskeleton. The protein resides in the microtubule organizing center. It is found in the centrosome. Functionally, component of the gamma-tubulin ring complex (gTuRC) which mediates microtubule nucleation. The gTuRC regulates the minus-end nucleation of alpha-beta tubulin heterodimers that grow into microtubule protafilaments, a critical step in centrosome duplication and spindle formation. The polypeptide is Gamma-tubulin complex component 5 (TUBGCP5) (Homo sapiens (Human)).